A 1176-amino-acid chain; its full sequence is Leucine--tRNA ligase, cytoplasmic (1176 aa).

Residues Tyr-52 and Tyr-54 each coordinate L-leucine. The 'HIGH' region motif lies at 60-63; it reads HLGH. Residue Ser-167 is modified to Phosphoserine. An editing domain region spans residues 260 to 509; the sequence is GPQEYTLLKL…DAGDALIYME (250 aa). Leu-594 and Ser-597 together coordinate L-leucine. A 'KMSKS' region motif is present at residues 716 to 720; sequence KMSKS. Lys-719 contacts ATP. Residue Ser-720 is modified to Phosphoserine. An N6-acetyllysine mark is found at Lys-970 and Lys-1047.

Belongs to the class-I aminoacyl-tRNA synthetase family. In terms of assembly, part of the aminoacyl-tRNA synthetase multienzyme complex, also known as multisynthetase complex (MSC), that is composed of the aminoacyl-tRNA ligases for Arg (RARS1), Asp (DARS1), Gln (QARS1), Ile (IARS1), Leu (LARS1), Lys (KARS1), Met (MARS1) the bifunctional ligase for Glu and Pro (EPRS1) and the auxiliary subunits AIMP1/p43, AIMP2/p38 and EEF1E1/p18.

It is found in the cytoplasm. The catalysed reaction is tRNA(Leu) + L-leucine + ATP = L-leucyl-tRNA(Leu) + AMP + diphosphate. It catalyses the reaction L-methionyl-tRNA(Leu) + H2O = tRNA(Leu) + L-methionine + H(+). With respect to regulation, 5-fluoro-1,3-dihydro-1-hydroxy-1,2-benzoxaborole inhibits LARS1 by forming a covalent adduct with the 3' adenosine of tRNA(Leu) at the editing site, thus locking the enzyme in an inactive conformation. Functionally, aminoacyl-tRNA synthetase that catalyzes the specific attachment of leucine to its cognate tRNA (tRNA(Leu)). It performs tRNA aminoacylation in a two-step reaction: Leu is initially activated by ATP to form a leucyl-adenylate (Leu-AMP) intermediate; then the leucyl moiety is transferred to the acceptor 3' end of the tRNA to yield leucyl-tRNA. To improve the fidelity of catalytic reactions, it is also able to hydrolyze misactivated aminoacyl-adenylate intermediates (pre-transfer editing) and mischarged aminoacyl-tRNAs (post-transfer editing). In Homo sapiens (Human), this protein is Leucine--tRNA ligase, cytoplasmic.